A 322-amino-acid polypeptide reads, in one-letter code: Rhomboid-like protein 16, chloroplastic (322 aa).

The transit peptide at 1–52 (MHAIFCRRVAVGCSSPQLTKLVTKQASQSRHSLSHLLPFDLSSRFVPPYVVS) directs the protein to the chloroplast. The next 6 helical transmembrane spans lie at 110 to 130 (WINGANGVVFGLVIANAAVFT), 166 to 186 (FSHVGATHIILNMMGLCYFGA), 201 to 221 (YFAGALGGSVFFLSSHALSVI), 238 to 258 (IGKLGANGPVYAITLLDMLLY), 265 to 285 (FGLMLRVPVFAGIYSLGLNII), and 295 to 315 (TLTSLDQLGGVVVAVIAWARI).

The protein belongs to the peptidase S54 family.

The protein resides in the plastid. The protein localises to the chloroplast membrane. Its function is as follows. Rhomboid-type serine protease that catalyzes intramembrane proteolysis. May cleave the plastid translocon component Tic40. This is Rhomboid-like protein 16, chloroplastic from Arabidopsis thaliana (Mouse-ear cress).